We begin with the raw amino-acid sequence, 152 residues long: Superoxide dismutase [Cu-Zn] 2 (152 aa).

N-linked (GlcNAc...) asparagine glycans are attached at residues asparagine 9 and asparagine 33. The Cu cation site is built by histidine 45, histidine 47, and histidine 62. Residues cysteine 56 and cysteine 145 are joined by a disulfide bond. Zn(2+) contacts are provided by histidine 62, histidine 70, histidine 79, and aspartate 82. An N-linked (GlcNAc...) asparagine glycan is attached at asparagine 85. A Cu cation-binding site is contributed by histidine 119.

Belongs to the Cu-Zn superoxide dismutase family. Cu cation is required as a cofactor. It depends on Zn(2+) as a cofactor. In terms of tissue distribution, expressed in fruits, leaves and pollen grains.

The protein resides in the cytoplasm. It localises to the endoplasmic reticulum. The enzyme catalyses 2 superoxide + 2 H(+) = H2O2 + O2. Its activity is regulated as follows. Inhibited by KCN and H(2)O(2). Functionally, destroys radicals which are normally produced within the cells and which are toxic to biological systems. Probably involved in the protection against oxidative stress during pollen development. In Olea europaea (Common olive), this protein is Superoxide dismutase [Cu-Zn] 2 (OLE5).